The primary structure comprises 429 residues: Histidine--tRNA ligase (429 aa).

The protein belongs to the class-II aminoacyl-tRNA synthetase family. Homodimer.

The protein resides in the cytoplasm. It carries out the reaction tRNA(His) + L-histidine + ATP = L-histidyl-tRNA(His) + AMP + diphosphate + H(+). The sequence is that of Histidine--tRNA ligase from Cyanothece sp. (strain PCC 7425 / ATCC 29141).